The sequence spans 265 residues: 4-hydroxy-tetrahydrodipicolinate reductase (265 aa).

9–14 (GARGKM) contributes to the NAD(+) binding site. An NADP(+)-binding site is contributed by K37. NAD(+) is bound by residues 99-101 (GTT) and 125-128 (APNF). H155 acts as the Proton donor/acceptor in catalysis. H156 contacts (S)-2,3,4,5-tetrahydrodipicolinate. K159 (proton donor) is an active-site residue. Position 165-166 (165-166 (GT)) interacts with (S)-2,3,4,5-tetrahydrodipicolinate.

It belongs to the DapB family.

Its subcellular location is the cytoplasm. It carries out the reaction (S)-2,3,4,5-tetrahydrodipicolinate + NAD(+) + H2O = (2S,4S)-4-hydroxy-2,3,4,5-tetrahydrodipicolinate + NADH + H(+). It catalyses the reaction (S)-2,3,4,5-tetrahydrodipicolinate + NADP(+) + H2O = (2S,4S)-4-hydroxy-2,3,4,5-tetrahydrodipicolinate + NADPH + H(+). Its pathway is amino-acid biosynthesis; L-lysine biosynthesis via DAP pathway; (S)-tetrahydrodipicolinate from L-aspartate: step 4/4. Functionally, catalyzes the conversion of 4-hydroxy-tetrahydrodipicolinate (HTPA) to tetrahydrodipicolinate. In Lysinibacillus sphaericus (strain C3-41), this protein is 4-hydroxy-tetrahydrodipicolinate reductase.